The following is a 90-amino-acid chain: MARVTVEDAVDKIGNRFDLVLVAARRARQIATEGKDPMVDVQNDKPTVTALREIEEGLVTAATLEQADLQAQEQQEHAEFASVANILSDQ.

The protein belongs to the RNA polymerase subunit omega family. In terms of assembly, the RNAP catalytic core consists of 2 alpha, 1 beta, 1 beta' and 1 omega subunit. When a sigma factor is associated with the core the holoenzyme is formed, which can initiate transcription.

It carries out the reaction RNA(n) + a ribonucleoside 5'-triphosphate = RNA(n+1) + diphosphate. Functionally, promotes RNA polymerase assembly. Latches the N- and C-terminal regions of the beta' subunit thereby facilitating its interaction with the beta and alpha subunits. The polypeptide is DNA-directed RNA polymerase subunit omega (Alteromonas mediterranea (strain DSM 17117 / CIP 110805 / LMG 28347 / Deep ecotype)).